A 525-amino-acid chain; its full sequence is GMP synthase [glutamine-hydrolyzing] (525 aa).

Positions 13–202 constitute a Glutamine amidotransferase type-1 domain; it reads TILVLDFGSQ…AVDLCHAKQN (190 aa). Cys-89 acts as the Nucleophile in catalysis. Catalysis depends on residues His-176 and Glu-178. Residues 203–400 enclose the GMPS ATP-PPase domain; the sequence is WTMKNFIGTE…LGISHELVWR (198 aa). 231-237 is an ATP binding site; the sequence is SGGVDST. Residues Arg-304, Asp-462, Lys-517, and Glu-523 each contribute to the XMP site.

In terms of assembly, homodimer. Mg(2+) is required as a cofactor.

The protein resides in the cytoplasm. Its subcellular location is the cytosol. The enzyme catalyses XMP + L-glutamine + ATP + H2O = GMP + L-glutamate + AMP + diphosphate + 2 H(+). The protein operates within purine metabolism; GMP biosynthesis; GMP from XMP (L-Gln route): step 1/1. Its function is as follows. Catalyzes the conversion of xanthine monophosphate (XMP) to GMP in the presence of glutamine and ATP through an adenyl-XMP intermediate. In Candida glabrata (strain ATCC 2001 / BCRC 20586 / JCM 3761 / NBRC 0622 / NRRL Y-65 / CBS 138) (Yeast), this protein is GMP synthase [glutamine-hydrolyzing] (GUA1).